A 262-amino-acid polypeptide reads, in one-letter code: Abhydrolase domain-containing protein ACTT2-2 (262 aa).

The short motif at 260 to 262 (SKL) is the Peroxisomal targeting signal type 1 element.

It belongs to the AB hydrolase superfamily. AKT2 hydrolase family.

It localises to the peroxisome. It functions in the pathway mycotoxin biosynthesis. Abhydrolase domain-containing protein; part of the gene clusters that mediate the biosynthesis of the host-selective toxins (HSTs) ACT-toxins responsible for brown spot of tangerine disease by the tangerine pathotype which affects tangerines and mandarins. ACT-toxins consist of three moieties, 9,10-epoxy-8-hydroxy-9-methyl-decatrienoic acid (EDA), valine and a polyketide. ACT-toxin I is toxic to both citrus and pear; toxin II the 5''-deoxy derivative of ACT-toxin I, is highly toxic to pear and slightly toxic to citrus. On cellular level, ACT-toxins affect plasma membrane of susceptible cells and cause a sudden increase in loss of K(+) after a few minutes of toxin treatment. The acyl-CoA ligase ACTT1, the hydrolase ACTT2, the enoyl-CoA hydratases ACTT3 and ACTT6, and the acyl-CoA synthetase ACTT5 are all involved in the biosynthesis of the AK-, AF- and ACT-toxin common 9,10-epoxy-8-hydroxy-9-methyl-decatrienoic acid (EDA) structural moiety. The exact role of each enzyme, and of additional enzymes identified within the AF-toxin clusters have still to be determined. On the other hand, ACTTS1 to ACTTS4 are specific to the tangerine pathotype. The function of ACTTS3 is to elongate the polyketide chain portion of ACT-toxin that is unique to this toxin. The enoyl-reductase ACTTS2 might complement the missing enoyl-reductase (ER) domain in ACTTS3 in the synthesis of the polyketide portion of ACT-toxin. The roles of the nonribosomal peptide synthetases-related proteins ACTTS1 and ACTTS4 have also still not been elucidated. The protein is Abhydrolase domain-containing protein ACTT2-2 (ACTT2-2) of Alternaria alternata (Alternaria rot fungus).